Consider the following 266-residue polypeptide: tRNA pseudouridine synthase A (266 aa).

Residue aspartate 51 is the Nucleophile of the active site. Tyrosine 106 provides a ligand contact to substrate.

Belongs to the tRNA pseudouridine synthase TruA family.

It catalyses the reaction uridine(38/39/40) in tRNA = pseudouridine(38/39/40) in tRNA. In terms of biological role, formation of pseudouridine at positions 38, 39 and 40 in the anticodon stem and loop of transfer RNAs. In Pyrococcus furiosus (strain ATCC 43587 / DSM 3638 / JCM 8422 / Vc1), this protein is tRNA pseudouridine synthase A.